A 61-amino-acid chain; its full sequence is uncharacterized protein (61 aa).

This is an uncharacterized protein from Fowlpox virus (strain NVSL) (FPV).